Reading from the N-terminus, the 1106-residue chain is Exportin-T (1106 aa).

Residues 336 to 357 (TPLESRTRTGPSAQNGQSDTSD) are disordered. The span at 343-357 (RTGPSAQNGQSDTSD) shows a compositional bias: polar residues.

Belongs to the exportin family.

Its subcellular location is the nucleus. The protein localises to the cytoplasm. Its function is as follows. tRNA nucleus export receptor which facilitates tRNA translocation across the nuclear pore complex. Involved in pre-tRNA splicing, probably by affecting the interaction of pre-tRNA with splicing endonuclease. The protein is Exportin-T (LOS1) of Mycosarcoma maydis (Corn smut fungus).